A 100-amino-acid polypeptide reads, in one-letter code: UPF0473 protein LMHCC_1068 (100 aa).

The protein belongs to the UPF0473 family.

In Listeria monocytogenes serotype 4a (strain HCC23), this protein is UPF0473 protein LMHCC_1068.